Consider the following 90-residue polypeptide: MARKLDMDKGAIISEYGLSKGDTGSPEVQIALLTARIARLTQHLKEHSFDHHSRRGLMLMVGRRRRLLSYLHGVDVSRYRAILSNLGLRR.

The protein belongs to the universal ribosomal protein uS15 family. As to quaternary structure, part of the 30S ribosomal subunit. Forms a bridge to the 50S subunit in the 70S ribosome, contacting the 23S rRNA.

In terms of biological role, one of the primary rRNA binding proteins, it binds directly to 16S rRNA where it helps nucleate assembly of the platform of the 30S subunit by binding and bridging several RNA helices of the 16S rRNA. Its function is as follows. Forms an intersubunit bridge (bridge B4) with the 23S rRNA of the 50S subunit in the ribosome. In Tropheryma whipplei (strain TW08/27) (Whipple's bacillus), this protein is Small ribosomal subunit protein uS15.